Here is a 211-residue protein sequence, read N- to C-terminus: Calaxin (211 aa).

3 EF-hand domains span residues T64 to G99, S100 to K135, and G145 to L180. 14 residues coordinate Ca(2+): D77, D79, D81, C83, E88, D113, N115, D117, E124, D158, D160, D162, K164, and D169.

In terms of assembly, component of the outer dynein arm-docking complex along with ODAD1, ODAD2, ODAD3 and ODAD4. As to expression, strong expression in the respiratory epithelium. Expressed in the sperm.

Its subcellular location is the cytoplasm. The protein localises to the cytoskeleton. It is found in the cilium axoneme. The protein resides in the cell projection. It localises to the cilium. Its subcellular location is the flagellum. In terms of biological role, component of the outer dynein arm-docking complex (ODA-DC) that mediates outer dynein arms (ODA) binding onto the doublet microtubule. Seems to regulate the assembly of both ODAs and their axonemal docking complex onto ciliary microtubules. Regulates ciliary and flagellar motility and is required for cilia-driven determination of body laterality. The sequence is that of Calaxin from Homo sapiens (Human).